Reading from the N-terminus, the 576-residue chain is uncharacterized protein (576 aa).

Residues 1-28 (MLRLNGLRVLLRTLAAIGALLTTASASA) form the signal peptide. Residue Ser-185 is the Acyl-ester intermediate of the active site. 2 disulfide bridges follow: Cys-252-Cys-269 and Cys-278-Cys-286. Residues Asp-253, Asp-256, Asp-260, and Val-262 each contribute to the Ca(2+) site. Active-site charge relay system residues include Asp-414 and His-464. Cys-529 and Cys-551 form a disulfide bridge.

Belongs to the tannase family.

This is an uncharacterized protein from Xanthomonas campestris pv. campestris (strain ATCC 33913 / DSM 3586 / NCPPB 528 / LMG 568 / P 25).